A 250-amino-acid polypeptide reads, in one-letter code: Coproheme decarboxylase (250 aa).

Residues Arg-131, 145-149, His-172, and Gln-185 each bind Fe-coproporphyrin III; that span reads YPMNK. The active site involves Tyr-145.

Belongs to the ChdC family. Type 1 subfamily. It depends on Fe-coproporphyrin III as a cofactor.

It catalyses the reaction Fe-coproporphyrin III + 2 H2O2 + 2 H(+) = heme b + 2 CO2 + 4 H2O. The enzyme catalyses Fe-coproporphyrin III + H2O2 + H(+) = harderoheme III + CO2 + 2 H2O. The catalysed reaction is harderoheme III + H2O2 + H(+) = heme b + CO2 + 2 H2O. Its pathway is porphyrin-containing compound metabolism; protoheme biosynthesis. Its function is as follows. Involved in coproporphyrin-dependent heme b biosynthesis. Catalyzes the decarboxylation of Fe-coproporphyrin III (coproheme) to heme b (protoheme IX), the last step of the pathway. The reaction occurs in a stepwise manner with a three-propionate intermediate. The polypeptide is Coproheme decarboxylase (Staphylococcus aureus (strain USA300 / TCH1516)).